The following is a 134-amino-acid chain: MAKSPANNAAQRVRKKVRKNISDGIAHVHASFNNTIITITDRQGNALSWASSGGQGFKGSRKSTPFAAQVASEVAGRAAIEQGIKNLDVEIKGPGPGRESSVRALGALGIRITSIADVTPVPHNGCRPQKRRRI.

This sequence belongs to the universal ribosomal protein uS11 family. As to quaternary structure, part of the 30S ribosomal subunit. Interacts with proteins S7 and S18. Binds to IF-3.

Located on the platform of the 30S subunit, it bridges several disparate RNA helices of the 16S rRNA. Forms part of the Shine-Dalgarno cleft in the 70S ribosome. This is Small ribosomal subunit protein uS11 from Delftia acidovorans (strain DSM 14801 / SPH-1).